The primary structure comprises 598 residues: Pentatricopeptide repeat-containing protein At1g09900 (598 aa).

PPR repeat units lie at residues 101–135 (EDVE…GNVP), 136–170 (DIIP…GAVP), 171–201 (DVIT…MSVS), 203–237 (DVVT…DCYP), 238–272 (DVIT…GCTP), 273–307 (DVVT…GCQP), 308–342 (NVIT…GFSP), 343–377 (SVVT…GCQP), 378–412 (NSLS…GCYP), 413–447 (DIVT…GCSP), 448–482 (VLIT…DLKP), 483–517 (DTIT…GIRP), 518–552 (NAVT…GCKP), and 553–587 (NETS…GLMK).

It belongs to the PPR family. P subfamily.

The protein is Pentatricopeptide repeat-containing protein At1g09900 of Arabidopsis thaliana (Mouse-ear cress).